Reading from the N-terminus, the 452-residue chain is Scaffold protein ILK (452 aa).

N-acetylmethionine is present on Met-1. 5 ANK repeats span residues 2–30, 31–63, 64–96, 97–129, and 130–174; these read DDIF…LNQG, DDHG…INVM, NRGD…INAV, NEHG…VSIC, and NKYG…GTTR. The interval 33-139 is interaction with LIMS1; it reads HGFSPLHWAC…NKYGEMPVDK (107 aa). Thr-173 is modified (phosphothreonine; by PAK1). A PH-like; mediates interaction with TGFB1I1 region spans residues 180–212; it reads GTLNKHSGIDFKQLNFLTKLNENHSGELWKGRW. Ser-186 is subject to Phosphoserine. The 254-residue stretch at 193-446 folds into the Protein kinase domain; that stretch reads LNFLTKLNEN…PKFDMIVPIL (254 aa). ATP-binding residues include Asn-200, Asn-202, His-203, Ser-204, and Lys-220. Phosphoserine; by PAK1 is present on Ser-246. ATP is bound by residues His-270, Met-272, and Asn-279. Residue Asp-339 coordinates Mg(2+). Lys-341 is a binding site for ATP. Positions 363–371 match the Nuclear localization signal motif; sequence KKPEDTNRR. An N6-acetyllysine modification is found at Lys-426.

The protein belongs to the protein kinase superfamily. TKL Ser/Thr protein kinase family. In terms of assembly, component of the heterotrimeric IPP (ILK-PINCH-PARVIN) complex composed of ILK, LIMS1/PINCH and PARVA; the complex binds to F-actin via the C-terminal tail of LIMS1 and the N-terminal region of PARVA, promoting F-actin filament bundling. Formation of the IPP complex is dependent on protein kinase C and precedes integrin-mediated cell adhesion and spreading. ILK also interacts with LIMS2/PINCH2 and with PARVB and PARVG which may substitute for LIMS1 and PARVA in the IPP complex; PARVA and PARVB compete for the same binding site. Interaction with PARVG promotes the establishment of cell polarity required for leukocyte migration. Interacts with the cytoplasmic domain of integrin ITGB1 and may also interact with integrins ITGB2, ITGB3 and/or ITGB5. Interacts probably also with TGFB1I1. Interacts (via ANK repeats) with EPHA1 (via SAM domain); stimulated by EFNA1 but independent of the kinase activity of EPHA1. Interacts with FERMT2. Interacts with LIMD2; leading to activate the protein kinase activity. Interacts with PXN/PAXILLIN (via LD motif 4). Interacts with CCDC25 (via cytoplasmic region); initiating the ILK-PARVB cascade to induce cytoskeleton rearrangement and directional migration of cells. Interacts with IQGAP1; the interaction is required for localization of IQGAP1 to the cell cortex. Phosphorylation by PAK1 modulates ILK subcellular location by promoting its nuclear export. As to expression, highly expressed in heart followed by skeletal muscle, pancreas and kidney. Weakly expressed in placenta, lung and liver.

The protein resides in the cell junction. It is found in the focal adhesion. Its subcellular location is the cell membrane. The protein localises to the cell projection. It localises to the lamellipodium. The protein resides in the cytoplasm. It is found in the myofibril. Its subcellular location is the sarcomere. The protein localises to the nucleus. It localises to the cytoskeleton. The protein resides in the microtubule organizing center. It is found in the centrosome. Its subcellular location is the cell cortex. Its function is as follows. Scaffold protein which mediates protein-protein interactions during a range of cellular events including focal adhesion assembly, cell adhesion and cell migration. Regulates integrin-mediated signal transduction by contributing to inside-out integrin activation. Recruits PARVA and LIMS1/PITCH to form the heterotrimeric IPP (ILK-PINCH-PARVIN) complex which binds to F-actin via the C-terminal tail of LIMS1 and the N-terminal region of PARVA, promoting F-actin filament bundling, a process required to generate force for actin cytoskeleton reorganization and subsequent dynamic cell adhesion events such as cell spreading and migration. Binding to PARVA promotes effective assembly of ILK into focal adhesions while PARVA-bound ILK can simultaneously engage integrin-beta cytoplasmic tails to mediate cell adhesion. Plays a role with PARVG in promoting the cell adhesion and spreading of leukocytes. Acts as an upstream effector of both AKT1/PKB and GSK3. Mediates trafficking of caveolae to the cell surface in an ITGB1-dependent manner by promoting the recruitment of IQGAP1 to the cell cortex which cooperates with its effector DIAPH1 to locally stabilize microtubules and allow stable insertion of caveolae into the plasma membrane. Required for the maintenance of mitotic spindle integrity by promoting phosphorylation of TACC3 by AURKA. Associates with chromatin and may act as a negative regulator of transcription when located in the nucleus. In Homo sapiens (Human), this protein is Scaffold protein ILK.